Consider the following 726-residue polypeptide: MNNDHLTRRVEALREQIRYHNYRYYVLDEPVISDAEYDALMRELRALEAAHPELVTPDSPTQRVGAPPGEQFAKVQHVVPMLSLANASDEAEVRAWYDRVVRLLGNDARVAFVVEPKIDGLAVTLIYRNGILVRGATRGDGETGEDVTANLRTIPGIPLRLGAFASNPEGQTNGAPVQAVIPPLIEVRGEVYMRIADFLRLNEQLAASGEKVAANPRNAAAGSLRQKDPAITARRPLRFFAYGIGQIEGVQVQTQWETLNLLRTLGFPVNRDARRFERLDDALAYCREWMTRRDELEYEVDGVVIKIDSLAQQAQLGVVGRDPRWAIAFKFPAREAVSRLIDIVVNVGRTGVITPNAVIEPVNIGGVTVRNASLHNADYIAERDIRIGDYVIVKRAGDVIPYIVGPIVARRDGSERPWQMPATCPACGTPLERAEGEVAYRCPNFGICPAQITRRIEHFVSRGAMDIAGIGEKQVQLFVERGWVQDVADLYTLTPDHFANVEGYGPKRVANLLSAIAGSKNRPLHRLIVGLGIRYVGEVVAQILADHFGSLDALAAASADEIDALEGIGPAIAASVAAYFARPESKALIAKLKRAGVRTEAQETARASRGNALAGKTFVITGTLPSMSREEASALITAHGGKVSGSVSKKTDYLVIGAEPGGTKFAKAQELGIPMIDEAGLLALIGSGRTADDQATPASDRRAATASVPPSDDAPGSPRQLDFDLT.

NAD(+)-binding positions include 34 to 38 (DAEYD), 83 to 84 (SL), and Glu-115. The N6-AMP-lysine intermediate role is filled by Lys-117. Positions 138, 190, 306, and 330 each coordinate NAD(+). Positions 424, 427, 442, and 448 each coordinate Zn(2+). The region spanning 608–698 (SRGNALAGKT…RTADDQATPA (91 aa)) is the BRCT domain. The tract at residues 690 to 726 (TADDQATPASDRRAATASVPPSDDAPGSPRQLDFDLT) is disordered.

Belongs to the NAD-dependent DNA ligase family. LigA subfamily. Mg(2+) is required as a cofactor. Requires Mn(2+) as cofactor.

The catalysed reaction is NAD(+) + (deoxyribonucleotide)n-3'-hydroxyl + 5'-phospho-(deoxyribonucleotide)m = (deoxyribonucleotide)n+m + AMP + beta-nicotinamide D-nucleotide.. DNA ligase that catalyzes the formation of phosphodiester linkages between 5'-phosphoryl and 3'-hydroxyl groups in double-stranded DNA using NAD as a coenzyme and as the energy source for the reaction. It is essential for DNA replication and repair of damaged DNA. In Roseiflexus sp. (strain RS-1), this protein is DNA ligase.